A 34-amino-acid chain; its full sequence is DWRVLVVLLPVLLAAGWAVRNILPYAVKQVQKLL.

The Lumenal portion of the chain corresponds to 1–5; the sequence is DWRVL. A helical membrane pass occupies residues 6 to 22; the sequence is VVLLPVLLAAGWAVRNI. Residues 23 to 34 lie on the Cytoplasmic side of the membrane; sequence LPYAVKQVQKLL.

It belongs to the PsbY family. In terms of assembly, PSII is composed of 1 copy each of membrane proteins PsbA, PsbB, PsbC, PsbD, PsbE, PsbF, PsbH, PsbI, PsbJ, PsbK, PsbL, PsbM, PsbT, PsbX, PsbY, PsbZ, Psb30/Ycf12, peripheral proteins PsbO, CyanoQ (PsbQ), PsbU, PsbV and a large number of cofactors. It forms dimeric complexes. This protein is only loosely associated with PSII, and is not often found in crystals. The cofactor is PSII binds multiple chlorophylls, carotenoids and specific lipids..

It is found in the cellular thylakoid membrane. Loosely associated component of the core of photosystem II (PSII). PSII is a light-driven water plastoquinone oxidoreductase, using light energy to abstract electrons from H(2)O, generating a proton gradient subsequently used for ATP formation. This chain is Photosystem II reaction center protein Y, found in Thermostichus vulcanus (Synechococcus vulcanus).